The following is a 666-amino-acid chain: Calpain-10 (666 aa).

Residues 13–321 (LFRDAAFPAS…FDEVTIGYPV (309 aa)) form the Calpain catalytic domain. Residues Cys73, His238, and Asn263 contribute to the active site. Domain III regions lie at residues 322-488 (TEAG…ISLS) and 507-648 (EWET…IHSQ).

The protein belongs to the peptidase C2 family. In terms of tissue distribution, ubiquitous.

It localises to the cytoplasm. Its subcellular location is the nucleus. Calcium-regulated non-lysosomal thiol-protease which catalyzes limited proteolysis of substrates involved in cytoskeletal remodeling and signal transduction. May play a role in insulin-stimulated glucose uptake. The sequence is that of Calpain-10 (Capn10) from Rattus norvegicus (Rat).